Reading from the N-terminus, the 100-residue chain is Integration host factor subunit beta (100 aa).

The protein belongs to the bacterial histone-like protein family. Heterodimer of an alpha and a beta chain.

This protein is one of the two subunits of integration host factor, a specific DNA-binding protein that functions in genetic recombination as well as in transcriptional and translational control. The sequence is that of Integration host factor subunit beta from Agrobacterium fabrum (strain C58 / ATCC 33970) (Agrobacterium tumefaciens (strain C58)).